The sequence spans 269 residues: Pyrroline-5-carboxylate reductase (269 aa).

It belongs to the pyrroline-5-carboxylate reductase family.

It is found in the cytoplasm. It catalyses the reaction L-proline + NADP(+) = (S)-1-pyrroline-5-carboxylate + NADPH + 2 H(+). It carries out the reaction L-proline + NAD(+) = (S)-1-pyrroline-5-carboxylate + NADH + 2 H(+). It functions in the pathway amino-acid biosynthesis; L-proline biosynthesis; L-proline from L-glutamate 5-semialdehyde: step 1/1. With respect to regulation, inhibited by p-chloromercuribenzoate. Functionally, catalyzes the reduction of 1-pyrroline-5-carboxylate (PCA) to L-proline. Does not catalyze the reverse reaction. This Escherichia coli (strain K12) protein is Pyrroline-5-carboxylate reductase.